Here is a 31-residue protein sequence, read N- to C-terminus: Histone H1.3 (31 aa).

The protein belongs to the histone H1/H5 family.

Its subcellular location is the nucleus. The protein localises to the chromosome. In terms of biological role, histones H1 are necessary for the condensation of nucleosome chains into higher-order structures. In Triticum aestivum (Wheat), this protein is Histone H1.3.